Reading from the N-terminus, the 252-residue chain is Fructose-1,6-bisphosphatase/inositol-1-monophosphatase (252 aa).

Positions 38, 40, 67, 82, 84, and 85 each coordinate Mg(2+). Residues 85-87 (DGT), arginine 167, alanine 172, and arginine 191 contribute to the substrate site. Residue aspartate 200 participates in Mg(2+) binding.

Belongs to the inositol monophosphatase superfamily. FBPase class 4 family. In terms of assembly, homodimer. Requires Mg(2+) as cofactor. The cofactor is Mn(2+).

It catalyses the reaction beta-D-fructose 1,6-bisphosphate + H2O = beta-D-fructose 6-phosphate + phosphate. It carries out the reaction a myo-inositol phosphate + H2O = myo-inositol + phosphate. Its activity is regulated as follows. Both FBPase and IMPase activities are inhibited by Ca(2+). In contrast to mammalian I-1-P phosphatases, is only very weakly inhibited by Li(+) (with an IC(50) of about 290 mM). In terms of biological role, phosphatase with broad specificity; it can dephosphorylate fructose 1,6-bisphosphate, both D and L isomers of inositol-1-phosphate (I-1-P), 2'-AMP, pNPP, inositol-2-phosphate, beta-glycerol phosphate, and alpha-D-glucose-1-phosphate. Cannot hydrolyze glucose-6-phosphate and fructose-6-phosphate. May be involved in the biosynthesis of a unique osmolyte, di-myo-inositol 1,1-phosphate. This is Fructose-1,6-bisphosphatase/inositol-1-monophosphatase (suhB) from Archaeoglobus fulgidus (strain ATCC 49558 / DSM 4304 / JCM 9628 / NBRC 100126 / VC-16).